Reading from the N-terminus, the 177-residue chain is MSELTTIARPYAKAAFEFAVEHKAVDQWLGMLGFAAQVAENETIHNLVHGSVAAEELANLFVGVCGEQLDEHGQNLIRVMAENGRLGVLPAVLAEFVAFKAELDKEVQADVISAIELTDQQKANIQASLEKRLARKVKLNCSMDASLMAGVLIKAGDLVIDGSVRGKLDRMADALQS.

It belongs to the ATPase delta chain family. In terms of assembly, F-type ATPases have 2 components, F(1) - the catalytic core - and F(0) - the membrane proton channel. F(1) has five subunits: alpha(3), beta(3), gamma(1), delta(1), epsilon(1). F(0) has three main subunits: a(1), b(2) and c(10-14). The alpha and beta chains form an alternating ring which encloses part of the gamma chain. F(1) is attached to F(0) by a central stalk formed by the gamma and epsilon chains, while a peripheral stalk is formed by the delta and b chains.

Its subcellular location is the cell inner membrane. In terms of biological role, f(1)F(0) ATP synthase produces ATP from ADP in the presence of a proton or sodium gradient. F-type ATPases consist of two structural domains, F(1) containing the extramembraneous catalytic core and F(0) containing the membrane proton channel, linked together by a central stalk and a peripheral stalk. During catalysis, ATP synthesis in the catalytic domain of F(1) is coupled via a rotary mechanism of the central stalk subunits to proton translocation. Its function is as follows. This protein is part of the stalk that links CF(0) to CF(1). It either transmits conformational changes from CF(0) to CF(1) or is implicated in proton conduction. This Aeromonas salmonicida (strain A449) protein is ATP synthase subunit delta.